Here is a 424-residue protein sequence, read N- to C-terminus: Trigger factor (424 aa).

Positions G163–P248 constitute a PPIase FKBP-type domain.

Belongs to the FKBP-type PPIase family. Tig subfamily.

The protein localises to the cytoplasm. The catalysed reaction is [protein]-peptidylproline (omega=180) = [protein]-peptidylproline (omega=0). In terms of biological role, involved in protein export. Acts as a chaperone by maintaining the newly synthesized protein in an open conformation. Functions as a peptidyl-prolyl cis-trans isomerase. The protein is Trigger factor of Bacillus pumilus (strain SAFR-032).